The chain runs to 765 residues: Palmitoyltransferase ZDHHC8 (765 aa).

Topologically, residues 1–13 (MPRSPGTRLKPAK) are cytoplasmic. Residues 14 to 34 (YIPVATAAALLVGSSTLFFVF) form a helical membrane-spanning segment. At 35 to 52 (TCPWLTRAVSPAVPVYNG) the chain is on the lumenal side. Residues 53–73 (IIFLFVLANFSMATFMDPGVF) form a helical membrane-spanning segment. Residues 74-148 (PRADEDEDKE…NCIGRRNYRY (75 aa)) are Cytoplasmic-facing. One can recognise a DHHC domain in the interval 104 to 154 (KWCATCHFYRPPRCSHCSVCDNCVEDFDHHCPWVNNCIGRRNYRYFFLFLL). The S-palmitoyl cysteine intermediate role is filled by Cys134. The helical transmembrane segment at 149–169 (FFLFLLSLSAHMVGVVAFGLV) threads the bilayer. Residues 170–190 (YVLNHAEGLGAAHTTITMAVM) are Lumenal-facing. A helical membrane pass occupies residues 191-211 (CVAGLFFIPVIGLTGFHVVLV). Residues 212–765 (TRGRTTNEHV…VGGTTYEISV (554 aa)) lie on the Cytoplasmic side of the membrane. The tract at residues 290–386 (LKAGLGRSKS…PGPDSLTLGE (97 aa)) is disordered. The span at 301 to 311 (GSLDRLDEKPL) shows a compositional bias: basic and acidic residues. Polar residues predominate over residues 333 to 348 (PRPSSAESALSAQRTS). Ser337 is modified (phosphoserine). The residue at position 441 (Arg441) is an Omega-N-methylarginine. Positions 447 to 542 (ALQPLRSEGG…PREPSPVRYD (96 aa)) are disordered. A phosphoserine mark is found at Ser606 and Ser627. The disordered stretch occupies residues 630–747 (SLSSAVSRAP…PGPSASPARH (118 aa)). A compositionally biased stretch (polar residues) spans 639 to 655 (PRTSSSSLQADLANNNA). The span at 671–680 (QGPPSPPSTP) shows a compositional bias: pro residues. Phosphoserine occurs at positions 675, 682, 725, and 743.

It belongs to the DHHC palmitoyltransferase family. ERF2/ZDHHC9 subfamily.

The protein localises to the golgi apparatus membrane. The protein resides in the mitochondrion membrane. It carries out the reaction L-cysteinyl-[protein] + hexadecanoyl-CoA = S-hexadecanoyl-L-cysteinyl-[protein] + CoA. Its function is as follows. Palmitoyltransferase that catalyzes the addition of palmitate onto various protein substrates and therefore functions in several unrelated biological processes. Through the palmitoylation of ABCA1 regulates the localization of the transporter to the plasma membrane and thereby regulates its function in cholesterol and phospholipid efflux. Could also pamitoylate the D(2) dopamine receptor DRD2 and regulate its stability and localization to the plasma membrane. Could also play a role in glutamatergic transmission. In Canis lupus familiaris (Dog), this protein is Palmitoyltransferase ZDHHC8.